Reading from the N-terminus, the 404-residue chain is Cysteine desulfurase IscS (404 aa).

Residues 85-86 (GT), N165, Q193, 213-215 (SGH), and T251 contribute to the pyridoxal 5'-phosphate site. Residue C338 is the Cysteine persulfide intermediate of the active site. C338 contributes to the [2Fe-2S] cluster binding site.

The protein belongs to the class-V pyridoxal-phosphate-dependent aminotransferase family. NifS/IscS subfamily. As to quaternary structure, homodimer. Forms a heterotetramer with IscU, interacts with other sulfur acceptors. The cofactor is pyridoxal 5'-phosphate.

It localises to the cytoplasm. It catalyses the reaction (sulfur carrier)-H + L-cysteine = (sulfur carrier)-SH + L-alanine. It participates in cofactor biosynthesis; iron-sulfur cluster biosynthesis. Its function is as follows. Master enzyme that delivers sulfur to a number of partners involved in Fe-S cluster assembly, tRNA modification or cofactor biosynthesis. Catalyzes the removal of elemental sulfur atoms from cysteine to produce alanine. Functions as a sulfur delivery protein for Fe-S cluster synthesis onto IscU, an Fe-S scaffold assembly protein, as well as other S acceptor proteins. This is Cysteine desulfurase IscS from Methanosarcina thermophila.